Consider the following 65-residue polypeptide: MPKMKTKSSAKKRLKVLGNGGVKRSMAFKRHILTKKTTKTKRQLRGTVMVHETNMASVRAMMPYA.

This sequence belongs to the bacterial ribosomal protein bL35 family.

This chain is Large ribosomal subunit protein bL35, found in Laribacter hongkongensis (strain HLHK9).